A 437-amino-acid chain; its full sequence is GTPase Era, mitochondrial (437 aa).

The N-terminal 20 residues, 1-20, are a transit peptide targeting the mitochondrion; that stretch reads MAAPRRYCAGLVRALLGARQ. The region spanning 112 to 330 is the Era-type G domain; the sequence is RVLRVVLLGA…QYLLTQAQPG (219 aa). The interval 120–127 is G1; it reads GAPNAGKS. 120–127 serves as a coordination point for GTP; sequence GAPNAGKS. The tract at residues 146–150 is G2; sequence HTTRC. Positions 167–170 are G3; the sequence is DTPG. 167 to 171 lines the GTP pocket; it reads DTPGI. At Ser173 the chain carries Phosphoserine. Position 236 to 239 (236 to 239) interacts with GTP; it reads NKVD. The tract at residues 236–239 is G4; the sequence is NKVD. Positions 270-292 are disordered; sequence LRSRSSTHCPGPETEGPNAHSVR. The tract at residues 308–310 is G5; it reads LSA. The 78-residue stretch at 360–437 folds into the KH type-2 domain; sequence LPEEVPYGVQ…LIRLSVKLLK (78 aa).

It belongs to the TRAFAC class TrmE-Era-EngA-EngB-Septin-like GTPase superfamily. Era GTPase family.

Its subcellular location is the mitochondrion matrix. The protein resides in the mitochondrion inner membrane. In terms of biological role, probable GTPase that plays a role in the mitochondrial ribosomal small subunit assembly. Specifically binds the 12S mitochondrial rRNA (12S mt-rRNA) to a 33 nucleotide section delineating the 3' terminal stem-loop region. May act as a chaperone that protects the 12S mt-rRNA on the 28S mitoribosomal subunit during ribosomal small subunit assembly. This Mus musculus (Mouse) protein is GTPase Era, mitochondrial (Eral1).